We begin with the raw amino-acid sequence, 292 residues long: L-serine dehydratase, alpha chain (292 aa).

Belongs to the iron-sulfur dependent L-serine dehydratase family. As to quaternary structure, heterooctamer of four alpha chains and four beta chains. It depends on [4Fe-4S] cluster as a cofactor.

The enzyme catalyses L-serine = pyruvate + NH4(+). It participates in carbohydrate biosynthesis; gluconeogenesis. This chain is L-serine dehydratase, alpha chain (sdhA), found in Peptoniphilus asaccharolyticus (Peptostreptococcus asaccharolyticus).